The chain runs to 196 residues: ATP-dependent Clp protease proteolytic subunit (196 aa).

The Nucleophile role is filled by Ser99. Residue His124 is part of the active site.

It belongs to the peptidase S14 family. In terms of assembly, fourteen ClpP subunits assemble into 2 heptameric rings which stack back to back to give a disk-like structure with a central cavity, resembling the structure of eukaryotic proteasomes.

Its subcellular location is the cytoplasm. It catalyses the reaction Hydrolysis of proteins to small peptides in the presence of ATP and magnesium. alpha-casein is the usual test substrate. In the absence of ATP, only oligopeptides shorter than five residues are hydrolyzed (such as succinyl-Leu-Tyr-|-NHMec, and Leu-Tyr-Leu-|-Tyr-Trp, in which cleavage of the -Tyr-|-Leu- and -Tyr-|-Trp bonds also occurs).. Cleaves peptides in various proteins in a process that requires ATP hydrolysis. Has a chymotrypsin-like activity. Plays a major role in the degradation of misfolded proteins. This Helicobacter pylori (strain ATCC 700392 / 26695) (Campylobacter pylori) protein is ATP-dependent Clp protease proteolytic subunit.